Here is a 366-residue protein sequence, read N- to C-terminus: Ribosomal RNA large subunit methyltransferase M (366 aa).

Residues S188, 221–224 (CPGG), D240, D260, and D277 each bind S-adenosyl-L-methionine. K306 serves as the catalytic Proton acceptor.

It belongs to the class I-like SAM-binding methyltransferase superfamily. RNA methyltransferase RlmE family. RlmM subfamily. Monomer.

The protein localises to the cytoplasm. The catalysed reaction is cytidine(2498) in 23S rRNA + S-adenosyl-L-methionine = 2'-O-methylcytidine(2498) in 23S rRNA + S-adenosyl-L-homocysteine + H(+). Its function is as follows. Catalyzes the 2'-O-methylation at nucleotide C2498 in 23S rRNA. The chain is Ribosomal RNA large subunit methyltransferase M from Salmonella arizonae (strain ATCC BAA-731 / CDC346-86 / RSK2980).